The chain runs to 118 residues: Non-specific lipid-transfer protein (118 aa).

A signal peptide spans 1-25; it reads MDCIRILWSVAVGLLLVSWRPTMFA. Cystine bridges form between C30–C76, C40–C53, C54–C98, and C74–C113.

Belongs to the plant LTP family.

In terms of biological role, plant non-specific lipid-transfer proteins transfer phospholipids as well as galactolipids across membranes. May play a role in wax or cutin deposition in the cell walls of expanding epidermal cells and certain secretory tissues. In Ambrosia artemisiifolia (Common ragweed), this protein is Non-specific lipid-transfer protein.